The primary structure comprises 355 residues: tRNA-specific 2-thiouridylase MnmA (355 aa).

Residues 6–13 and Met-32 contribute to the ATP site; that span reads AMSGGVDS. Cys-93 serves as the catalytic Nucleophile. A disulfide bridge links Cys-93 with Cys-191. Gly-117 lines the ATP pocket. The interaction with tRNA stretch occupies residues 140–142; it reads KDQ. Cys-191 (cysteine persulfide intermediate) is an active-site residue. Residues 296–297 are interaction with tRNA; it reads RY.

The protein belongs to the MnmA/TRMU family.

The protein resides in the cytoplasm. The catalysed reaction is S-sulfanyl-L-cysteinyl-[protein] + uridine(34) in tRNA + AH2 + ATP = 2-thiouridine(34) in tRNA + L-cysteinyl-[protein] + A + AMP + diphosphate + H(+). Its function is as follows. Catalyzes the 2-thiolation of uridine at the wobble position (U34) of tRNA, leading to the formation of s(2)U34. The protein is tRNA-specific 2-thiouridylase MnmA of Pelobacter propionicus (strain DSM 2379 / NBRC 103807 / OttBd1).